The sequence spans 393 residues: Stearoyl-[acyl-carrier-protein] 9-desaturase, chloroplastic (393 aa).

Residues M1 to M30 constitute a chloroplast transit peptide. Residues E135, E173, H176, E259, and H262 each contribute to the Fe cation site.

The protein belongs to the fatty acid desaturase type 2 family. In terms of assembly, homodimer. It depends on Fe(2+) as a cofactor.

It is found in the plastid. Its subcellular location is the chloroplast. It carries out the reaction octadecanoyl-[ACP] + 2 reduced [2Fe-2S]-[ferredoxin] + O2 + 2 H(+) = (9Z)-octadecenoyl-[ACP] + 2 oxidized [2Fe-2S]-[ferredoxin] + 2 H2O. Its pathway is lipid metabolism; fatty acid metabolism. Functionally, converts stearoyl-ACP to oleoyl-ACP by introduction of a cis double bond between carbons 9 and 10 of the acyl chain. The protein is Stearoyl-[acyl-carrier-protein] 9-desaturase, chloroplastic of Solanum tuberosum (Potato).